We begin with the raw amino-acid sequence, 377 residues long: Pseudouridylate synthase RPUSD4, mitochondrial (377 aa).

The transit peptide at 1 to 46 (MAAPCLRTPGVQLLSMSSRPGRLFTPGSWSFCSSATSSRPLNAQRL) directs the protein to the mitochondrion. Residue Asp153 is part of the active site.

Belongs to the pseudouridine synthase RluA family. Interacts with 16S mt-rRNA, mt-tRNA(Phe) and mt-tRNA(Met). Forms a regulatory protein-RNA complex, consisting of RCC1L, NGRN, RPUSD3, RPUSD4, TRUB2, FASTKD2 and 16S mt-rRNA.

It localises to the mitochondrion matrix. Its subcellular location is the nucleus. The protein resides in the cytoplasm. It carries out the reaction uridine in 5S rRNA = pseudouridine in 5S rRNA. It catalyses the reaction a uridine in tRNA = a pseudouridine in tRNA. The catalysed reaction is a uridine in mRNA = a pseudouridine in mRNA. Functionally, catalyzes uridine to pseudouridine isomerization (pseudouridylation) of different mitochondrial RNA substrates. Acts on position 1397 in 16S mitochondrial ribosomal RNA (16S mt-rRNA). This modification is required for the assembly of 16S mt-rRNA into a functional mitochondrial ribosome. As a component of a functional protein-RNA module, consisting of RCC1L, NGRN, RPUSD3, RPUSD4, TRUB2, FASTKD2 and 16S mt-rRNA, controls 16S mt-rRNA abundance and is required for intra-mitochondrial translation. Acts on position 39 in mitochondrial tRNA(Phe). Also catalyzes pseudouridylation of mRNAs in nucleus: acts as a regulator of pre-mRNA splicing by mediating pseudouridylation of pre-mRNAs at locations associated with alternatively spliced regions. Pseudouridylation of pre-mRNAs near splice sites directly regulates mRNA splicing and mRNA 3'-end processing. The protein is Pseudouridylate synthase RPUSD4, mitochondrial of Mus musculus (Mouse).